The chain runs to 295 residues: Pyridoxal 5'-phosphate synthase subunit PdxS (295 aa).

D-ribose 5-phosphate is bound at residue Asp-25. Lys-82 serves as the catalytic Schiff-base intermediate with D-ribose 5-phosphate. Gly-154 is a D-ribose 5-phosphate binding site. Residue Arg-166 coordinates D-glyceraldehyde 3-phosphate. Residues Gly-215 and 236 to 237 (GS) each bind D-ribose 5-phosphate.

Belongs to the PdxS/SNZ family. As to quaternary structure, in the presence of PdxT, forms a dodecamer of heterodimers.

It carries out the reaction aldehydo-D-ribose 5-phosphate + D-glyceraldehyde 3-phosphate + L-glutamine = pyridoxal 5'-phosphate + L-glutamate + phosphate + 3 H2O + H(+). The protein operates within cofactor biosynthesis; pyridoxal 5'-phosphate biosynthesis. Its function is as follows. Catalyzes the formation of pyridoxal 5'-phosphate from ribose 5-phosphate (RBP), glyceraldehyde 3-phosphate (G3P) and ammonia. The ammonia is provided by the PdxT subunit. Can also use ribulose 5-phosphate and dihydroxyacetone phosphate as substrates, resulting from enzyme-catalyzed isomerization of RBP and G3P, respectively. The sequence is that of Pyridoxal 5'-phosphate synthase subunit PdxS from Bacillus cytotoxicus (strain DSM 22905 / CIP 110041 / 391-98 / NVH 391-98).